The chain runs to 289 residues: Phosphatidylserine decarboxylase proenzyme (289 aa).

Catalysis depends on charge relay system; for autoendoproteolytic cleavage activity residues D92, H149, and S254. S254 serves as the catalytic Schiff-base intermediate with substrate; via pyruvic acid; for decarboxylase activity. At S254 the chain carries Pyruvic acid (Ser); by autocatalysis.

Belongs to the phosphatidylserine decarboxylase family. PSD-B subfamily. Prokaryotic type I sub-subfamily. In terms of assembly, heterodimer of a large membrane-associated beta subunit and a small pyruvoyl-containing alpha subunit. Pyruvate serves as cofactor. In terms of processing, is synthesized initially as an inactive proenzyme. Formation of the active enzyme involves a self-maturation process in which the active site pyruvoyl group is generated from an internal serine residue via an autocatalytic post-translational modification. Two non-identical subunits are generated from the proenzyme in this reaction, and the pyruvate is formed at the N-terminus of the alpha chain, which is derived from the carboxyl end of the proenzyme. The autoendoproteolytic cleavage occurs by a canonical serine protease mechanism, in which the side chain hydroxyl group of the serine supplies its oxygen atom to form the C-terminus of the beta chain, while the remainder of the serine residue undergoes an oxidative deamination to produce ammonia and the pyruvoyl prosthetic group on the alpha chain. During this reaction, the Ser that is part of the protease active site of the proenzyme becomes the pyruvoyl prosthetic group, which constitutes an essential element of the active site of the mature decarboxylase.

The protein resides in the cell membrane. It carries out the reaction a 1,2-diacyl-sn-glycero-3-phospho-L-serine + H(+) = a 1,2-diacyl-sn-glycero-3-phosphoethanolamine + CO2. Its pathway is phospholipid metabolism; phosphatidylethanolamine biosynthesis; phosphatidylethanolamine from CDP-diacylglycerol: step 2/2. Catalyzes the formation of phosphatidylethanolamine (PtdEtn) from phosphatidylserine (PtdSer). The protein is Phosphatidylserine decarboxylase proenzyme of Pseudomonas paraeruginosa (strain DSM 24068 / PA7) (Pseudomonas aeruginosa (strain PA7)).